The following is an 88-amino-acid chain: Small ribosomal subunit protein bS16 (88 aa).

The protein belongs to the bacterial ribosomal protein bS16 family.

The chain is Small ribosomal subunit protein bS16 from Mesomycoplasma hyopneumoniae (strain 232) (Mycoplasma hyopneumoniae).